The chain runs to 1374 residues: Y' element ATP-dependent helicase YML133C (1374 aa).

In terms of domain architecture, Helicase ATP-binding spans 375-552 (EIYMADTPSV…LQRIGLTGLA (178 aa)). 388–395 (APPGYGKT) lines the ATP pocket. One can recognise a Helicase C-terminal domain in the interval 609–758 (KLLLALFEIE…EFYGLESKKG (150 aa)). Low complexity predominate over residues 832-975 (ANASTNATTN…ATTTESTNAS (144 aa)). The disordered stretch occupies residues 832–999 (ANASTNATTN…RFHPVTDINK (168 aa)). Basic and acidic residues predominate over residues 976–999 (AKEDANKDGNAEDNRFHPVTDINK).

This sequence belongs to the helicase family. Yeast subtelomeric Y' repeat subfamily.

Catalyzes DNA unwinding and is involved in telomerase-independent telomere maintenance. The protein is Y' element ATP-dependent helicase YML133C of Saccharomyces cerevisiae (strain ATCC 204508 / S288c) (Baker's yeast).